The sequence spans 99 residues: MALTKAEMSEYLFDKLGLSKRDAKELVELFFEEIRRALENGEQVKLSGFGNFDLRDKNQRPGRNPKTGEDIPITARRVVTFRPGQKLKSRVENASPKDE.

Positions 49-73 (FGNFDLRDKNQRPGRNPKTGEDIPI) are disordered.

It belongs to the bacterial histone-like protein family. As to quaternary structure, heterodimer of an alpha and a beta chain.

Functionally, this protein is one of the two subunits of integration host factor, a specific DNA-binding protein that functions in genetic recombination as well as in transcriptional and translational control. The sequence is that of Integration host factor subunit alpha from Shigella boydii serotype 18 (strain CDC 3083-94 / BS512).